A 143-amino-acid polypeptide reads, in one-letter code: Nucleoside diphosphate kinase (143 aa).

The ATP site is built by K11, F59, R87, T93, R104, and N114. Residue H117 is the Pros-phosphohistidine intermediate of the active site.

It belongs to the NDK family. As to quaternary structure, homotetramer. It depends on Mg(2+) as a cofactor.

The protein resides in the cytoplasm. It carries out the reaction a 2'-deoxyribonucleoside 5'-diphosphate + ATP = a 2'-deoxyribonucleoside 5'-triphosphate + ADP. The enzyme catalyses a ribonucleoside 5'-diphosphate + ATP = a ribonucleoside 5'-triphosphate + ADP. Major role in the synthesis of nucleoside triphosphates other than ATP. The ATP gamma phosphate is transferred to the NDP beta phosphate via a ping-pong mechanism, using a phosphorylated active-site intermediate. The chain is Nucleoside diphosphate kinase from Escherichia coli O7:K1 (strain IAI39 / ExPEC).